The sequence spans 537 residues: Polyadenylate-binding protein 6 (537 aa).

RRM domains follow at residues 21–99 (GSLY…WSQR), 112–188 (ANLY…KFIN), 202–279 (TNVY…KALK), and 304–381 (SNLY…VAER). Positions 503–537 (KATTSEENRKEERRLTLSGKLSPEVKVEESGKQLQ) are disordered. 2 stretches are compositionally biased toward basic and acidic residues: residues 506-517 (TSEENRKEERRL) and 525-537 (PEVK…KQLQ).

The protein belongs to the polyadenylate-binding protein type-1 family. As to expression, expressed at low levels in leaves and young seedlings.

It localises to the cytoplasm. Its subcellular location is the nucleus. In terms of biological role, binds the poly(A) tail of mRNA. Appears to be an important mediator of the multiple roles of the poly(A) tail in mRNA biogenesis, stability and translation. The protein is Polyadenylate-binding protein 6 (PAB6) of Arabidopsis thaliana (Mouse-ear cress).